The primary structure comprises 552 residues: MERFLRKYNISGDYANATRTFLAISPQWTCSHLKRNCLFNGMCVKQHFERAMIAATDAEEPAKAYKLVELAKEAMYDRETVWLQCFKSFSQPYEEDVEGKMKRCGAQLLEDYRKSGMMDEAVKQSALVNSERIRLDDSLSAMPYIYVPINDGQIVNPTFISRYRQIAYYFYNPDAADDWIDPNLFGIRGQHNQIKREVERQINTCPYTGYRGRVFQVMFLPIQLINFLRMDDFAKHFNRYASMAIQQYLRVGYAEEIRYVQQLFGRVPTGEFPLHQMMLMRRDLPTRDRSIVEARVRRSGDESWQSWLLPMIIIREGLDHQDRWEWFIDYMDRKHTCQLCYLKHSKQIPTCSVIDVRASELTGCSPFKMVKIEEHVGNDSVFKTKLVRDEQIGRIGDHYYTTNCYTGAEALITTAIHIHHWIRGSGIWNDEGWQEGIFMLGRVLLRWELTKAQRSALLRLFCFVCYGYAPRADGTIPDWNNLGNFLDIILKGPELSEDEDERAYATMFEMVRCIITLCYAEKVHFAGFAAPACEGGEVINLAAAMSQMWMEY.

Belongs to the orbivirus non-structural protein NS1 family.

The protein is Non-structural protein NS1 (Segment-5) of Bluetongue virus 10 (isolate USA) (BTV 10).